The sequence spans 500 residues: Glycerol kinase (500 aa).

An ADP-binding site is contributed by Thr-11. Thr-11, Thr-12, and Ser-13 together coordinate ATP. A sn-glycerol 3-phosphate-binding site is contributed by Thr-11. ADP is bound at residue Arg-15. Sn-glycerol 3-phosphate contacts are provided by Arg-81, Glu-82, Tyr-133, and Asp-242. 5 residues coordinate glycerol: Arg-81, Glu-82, Tyr-133, Asp-242, and Gln-243. ADP contacts are provided by Thr-264 and Gly-307. 4 residues coordinate ATP: Thr-264, Gly-307, Gln-311, and Gly-411. Gly-411 is an ADP binding site.

Belongs to the FGGY kinase family.

It catalyses the reaction glycerol + ATP = sn-glycerol 3-phosphate + ADP + H(+). The protein operates within polyol metabolism; glycerol degradation via glycerol kinase pathway; sn-glycerol 3-phosphate from glycerol: step 1/1. Inhibited by fructose 1,6-bisphosphate (FBP). Key enzyme in the regulation of glycerol uptake and metabolism. Catalyzes the phosphorylation of glycerol to yield sn-glycerol 3-phosphate. The sequence is that of Glycerol kinase from Bradyrhizobium diazoefficiens (strain JCM 10833 / BCRC 13528 / IAM 13628 / NBRC 14792 / USDA 110).